The primary structure comprises 93 residues: Large ribosomal subunit protein eL42 (93 aa).

Zn(2+) contacts are provided by C11, C14, C72, and C75. A C4-type zinc finger spans residues 11–75; sequence CPHCHSHFEH…TDLKYRCSEC (65 aa).

Belongs to the eukaryotic ribosomal protein eL42 family. As to quaternary structure, part of the 50S ribosomal subunit. Zn(2+) serves as cofactor.

Binds to the 23S rRNA. The sequence is that of Large ribosomal subunit protein eL42 (rpl44e) from Natronomonas pharaonis (strain ATCC 35678 / DSM 2160 / CIP 103997 / JCM 8858 / NBRC 14720 / NCIMB 2260 / Gabara) (Halobacterium pharaonis).